The sequence spans 532 residues: MGKKVAIIGAGVSGLASIRSCLEEGLEPTCFEKSNDIGGLWKFSDHAEEGRASIYKSVFTNSSKEMMCFPDFPYPDDFPNFMHNSKIQEYLTAFAKEKSLLKYIQFKTFVSSVNKRPDFATTGQWDVTTERDGKRESAVFDAVMVCSGHHVYPNLPKESFPGLNHFKGKCFHSRDYKEPGVFKGKRVLVVGLGNSGCDIATELSHTAEQVVISSRSGSWVMSRVWDNGYPWDMVLITRFGTFLKNNLPTAISDWLYMKQMNARFKHENYGLMPLNGVLRKEPVFNDELPACILCGIVSVKPNVKKFTETSAIFEDGTTFEGIDCVIFATGYSYTYTFLDESIIKNRNNEIILFKGVFPPLLEKSTIAVIGFVQSLGAAIPTVDLQSRWAARVIKGTCTLPSMEDMMNDINEKMERKHKWYGKSETLQTDYIVYMDELSSFIGVKPNIPWLFLTDPKLAMEVYFGPCSPYQFRLVGPGKWPGARNAILTQWDRSLKPLQTRVVGRLQKPCFFFHWLKPFAIPILLIAVFLGLT.

FAD-binding positions include 9–13, Glu-32, 40–41, and 61–62; these read GAGVS, LW, and NS. Residues 60–61 and 195–198 contribute to the NADP(+) site; these read TN and SGCD. Phosphoserine is present on Ser-401. The helical transmembrane segment at 510–530 threads the bilayer; sequence FFFHWLKPFAIPILLIAVFLG.

Belongs to the FMO family. FAD serves as cofactor. As to expression, liver.

Its subcellular location is the microsome membrane. The protein resides in the endoplasmic reticulum membrane. The enzyme catalyses trimethylamine + NADPH + O2 = trimethylamine N-oxide + NADP(+) + H2O. It carries out the reaction N,N-dimethylaniline + NADPH + O2 + H(+) = N,N-dimethylaniline N-oxide + NADP(+) + H2O. The catalysed reaction is hypotaurine + NADPH + O2 + H(+) = taurine + NADP(+) + H2O. It catalyses the reaction (S)-nicotine + NADPH + O2 = trans-(S)-nicotine N(1')-oxide + NADP(+) + H2O. The enzyme catalyses albendazole + NADPH + O2 + H(+) = albendazole S-oxide + NADP(+) + H2O. Essential hepatic enzyme that catalyzes the oxygenation of a wide variety of nitrogen- and sulfur-containing compounds including drugs as well as dietary compounds. Plays an important role in the metabolism of trimethylamine (TMA), via the production of trimethylamine N-oxide (TMAO) metabolite. TMA is generated by the action of gut microbiota using dietary precursors such as choline, choline containing compounds, betaine or L-carnitine. By regulating TMAO concentration, FMO3 directly impacts both platelet responsiveness and rate of thrombus formation. This chain is Flavin-containing monooxygenase 3 (FMO3), found in Macaca mulatta (Rhesus macaque).